The primary structure comprises 87 residues: Keratin-associated protein 19-3 (87 aa).

The interval 9 to 82 is 23 X 2 AA repeats of G-[YCGS]; it reads GGLGYGYGSF…RRPSCCGGYG (74 aa).

Belongs to the KRTAP type 19 family. Interacts with hair keratins. In terms of tissue distribution, strong expression in narrowly defined pattern restricted to the lower and middle cortical regions of the hair shaft in both developing and cycling hair. During hair follicle regression (catagen), expression levels decrease until expression is no longer detectable in follicles at resting stage (telogen).

In the hair cortex, hair keratin intermediate filaments are embedded in an interfilamentous matrix, consisting of hair keratin-associated proteins (KRTAP), which are essential for the formation of a rigid and resistant hair shaft through their extensive disulfide bond cross-linking with abundant cysteine residues of hair keratins. The matrix proteins include the high-sulfur and high-glycine-tyrosine keratins. This chain is Keratin-associated protein 19-3 (Krtap19-3), found in Mus musculus (Mouse).